Here is a 49-residue protein sequence, read N- to C-terminus: ILIIGGTGYIGRKVDVVISAVKFLPSEFGNDVDRVVFVKEEDIGTFTIK.

5 to 11 (GGTGYIG) provides a ligand contact to NADP(+).

Belongs to the NmrA-type oxidoreductase family. Isoflavone reductase subfamily.

It localises to the cytoplasm. The chain is Isoflavone reductase homolog 2 from Pseudotsuga menziesii (Douglas-fir).